The chain runs to 408 residues: uncharacterized protein (408 aa).

Polar residues predominate over residues 376–386 (NELNDPNSVYN). The segment at 376–408 (NELNDPNSVYNSPEFDHQGDQKKLTEENGCVVQ) is disordered. The span at 389 to 401 (EFDHQGDQKKLTE) shows a compositional bias: basic and acidic residues.

This is an uncharacterized protein from Acanthamoeba polyphaga (Amoeba).